The following is a 547-amino-acid chain: Chaperonin GroEL (547 aa).

Residues 30-33, lysine 51, 87-91, glycine 415, 480-482, and aspartate 496 contribute to the ATP site; these read TLGP, DGTTT, and NAA. The segment at 525–547 is disordered; that stretch reads KPDDKPAMPPMGGGMGGMGGMDF. The span at 535–547 shows a compositional bias: gly residues; sequence MGGGMGGMGGMDF.

This sequence belongs to the chaperonin (HSP60) family. In terms of assembly, forms a cylinder of 14 subunits composed of two heptameric rings stacked back-to-back. Interacts with the co-chaperonin GroES.

It localises to the cytoplasm. It carries out the reaction ATP + H2O + a folded polypeptide = ADP + phosphate + an unfolded polypeptide.. In terms of biological role, together with its co-chaperonin GroES, plays an essential role in assisting protein folding. The GroEL-GroES system forms a nano-cage that allows encapsulation of the non-native substrate proteins and provides a physical environment optimized to promote and accelerate protein folding. The sequence is that of Chaperonin GroEL from Novosphingobium aromaticivorans (strain ATCC 700278 / DSM 12444 / CCUG 56034 / CIP 105152 / NBRC 16084 / F199).